Consider the following 414-residue polypeptide: eIF5-mimic protein 1 (414 aa).

Positions M1–K22 are disordered. The region spanning V248–I414 is the W2 domain.

This sequence belongs to the BZW family.

The protein localises to the cytoplasm. Functionally, translation initiation regulator which may repress non-AUG initiated translation and repeat-associated non-AUG (RAN) initiated translation by acting as a competitive inhibitor of eukaryotic translation initiation factor 5 (EIF5) function. The sequence is that of eIF5-mimic protein 1 (BZW2) from Gallus gallus (Chicken).